The chain runs to 938 residues: Auxilin (938 aa).

The interval 19–41 is disordered; the sequence is AAAGENRMKDSENKGASSPDMEP. 3 repeat units span residues 61–64, 65–68, and 69–72. Residues 61–72 are 3 X 4 AA approximate tandem repeats; that stretch reads NLKDNLKDTLKD. Positions 80–247 constitute a Phosphatase tensin-type domain; it reads SVSSYTKGDL…GYMCDLLADK (168 aa). Phosphoserine is present on Ser137. Cys189 acts as the Phosphocysteine intermediate in catalysis. The region spanning 253 to 391 is the C2 tensin-type domain; it reads FKPLTIKAIT…FQVTLDIEVQ (139 aa). The SH3-binding motif lies at 434-442; the sequence is PADLPPDHP. The tract at residues 467-801 is disordered; it reads EEDHAALVNQ…GKGSTNLEGK (335 aa). Residues Ser478 and Ser481 each carry the phosphoserine modification. A compositionally biased stretch (polar residues) spans 531-548; that stretch reads DVSTNFSSLAAPPSNSEL. Over residues 559–569 the composition is skewed to low complexity; the sequence is TGPAQAGQAGV. 2 stretches are compositionally biased toward polar residues: residues 579 to 596 and 624 to 654; these read VSAQSTPRRTATSASASP and FLNTSSASSDPFLQPTRSPSPTVHASSTPAV. Ser595 is subject to Phosphoserine. Low complexity predominate over residues 679–694; the sequence is SAATSPTGSSHGTPTH. Over residues 754 to 781 the composition is skewed to polar residues; sequence NWQQTQSKPQSSMPHSSPQNRPNYNVSF. Positions 874–938 constitute a J domain; the sequence is TKWKPVGMAD…FENQGQKPLY (65 aa).

Forms a complex composed of HSPA8, CLTC and DNAJC6. Interacts with HSPA8/HSC70 in an ATP-dependent manner; this interaction stimulates the HSPA8's ATPase activity. Interacts with CLTC; this interaction produces a local change in heavy-chain contacts, creating a detectable global distortion of the clathrin coat. Interacts with AP2A2. Interacts with DNM1(GTP-bound form); this interaction allows clathrin-coated vesicle (CCV) formation at the plasma membrane. In terms of processing, the N-terminus is blocked. Phosphorylation at Ser-595 modulates its ability to bind CLTC and therefore the synaptic vesicle endocytosis (SVE).

It is found in the cytoplasmic vesicle. The protein localises to the clathrin-coated vesicle. May act as a protein phosphatase and/or a lipid phosphatase. Co-chaperone that recruits HSPA8/HSC70 to clathrin-coated vesicles (CCVs) and promotes the ATP-dependent dissociation of clathrin from CCVs and participates in clathrin-mediated endocytosis of synaptic vesicles and their recycling and also in intracellular trafficking. Firstly, binds tightly to the clathrin cages, at a ratio of one DNAJC6 per clathrin triskelion. The HSPA8:ATP complex then binds to the clathrin-auxilin cage, initially at a ratio of one HSPA8 per triskelion leading to ATP hydrolysis stimulation and causing a conformational change in the HSPA8. This cycle is repeated three times to drive to a complex containing the clathrin-auxilin cage associated to three HSPA8:ADP complex. The ATP hydrolysis of the third HSPA8:ATP complex leads to a concerted dismantling of the cage into component triskelia. Then, dissociates from the released triskelia and be recycled to initiate another cycle of HSPA8's recruitment. Also acts during the early steps of clathrin-coated vesicle (CCV) formation through its interaction with the GTP bound form of DNM1. This is Auxilin from Mus musculus (Mouse).